The following is a 270-amino-acid chain: tRNA (guanine-N(1)-)-methyltransferase (270 aa).

S-adenosyl-L-methionine is bound by residues glycine 113 and 133–138 (IGDYVL). Residues 251–270 (APTEGTGLIHHRDVEGPGEG) form a disordered region. Residues 260–270 (HHRDVEGPGEG) are compositionally biased toward basic and acidic residues.

Belongs to the RNA methyltransferase TrmD family. Homodimer.

It localises to the cytoplasm. It catalyses the reaction guanosine(37) in tRNA + S-adenosyl-L-methionine = N(1)-methylguanosine(37) in tRNA + S-adenosyl-L-homocysteine + H(+). In terms of biological role, specifically methylates guanosine-37 in various tRNAs. This Frankia casuarinae (strain DSM 45818 / CECT 9043 / HFP020203 / CcI3) protein is tRNA (guanine-N(1)-)-methyltransferase.